A 519-amino-acid chain; its full sequence is Na(+)/H(+) exchange regulatory cofactor NHE-RF3 (519 aa).

The region spanning 9–90 (ECKLSKQEGQ…SVTLLVLDGD (82 aa)) is the PDZ 1 domain. Phosphoserine occurs at positions 108, 148, 192, 250, 334, and 348. PDZ domains are found at residues 128–215 (EPCA…VDKE) and 243–323 (VVVI…LDKE). Positions 348–374 (SVKEGPAPIPAPLEATGSEPTEDAEGH) are disordered. In terms of domain architecture, PDZ 4 spans 378–458 (LCRLLKEDDS…HVTLLVCGKM (81 aa)). A phosphothreonine mark is found at T451 and T488. The segment at 479-519 (VAGPDEKGETSAESEHDAHPAKDRTLSTASHSSSNSEDTEM) is disordered. The segment covering 482–503 (PDEKGETSAESEHDAHPAKDRT) has biased composition (basic and acidic residues). Phosphoserine is present on residues S489 and S492. T503 carries the phosphothreonine modification. Positions 505-519 (STASHSSSNSEDTEM) are enriched in low complexity. 5 positions are modified to phosphoserine: S508, S510, S511, S512, and S514.

It belongs to the NHER family. In terms of assembly, interacts with PDZK1IP1 and ABCC2. Binds to the C-terminal region of SLC26A3. Interacts (via C-terminal PDZ domain) with SLC26A6 (via C-terminal domain). Interacts (via C-terminal PDZ domain) with SLC9A3 (via C-terminal domain). Component of a complex, composed of PDZK1, SYNGAP1, KLHL17 and NMDA receptors. Interacts (via PDZ1 domain) directly with KLHL17; the interaction is important for integrity of actin cytoskeleton structures in neurons. Forms a heterodimeric complex with NHERF1. Interacts with AKAP2, BCR, CFTR, SLCO1A1, SLC22A12, SLC22A4, SLC22A5, SLC26A6, NHERF2 and SLC17A1. Interacts (via the first PDZ domain) with PTGIR (via non-isoprenylated C-terminus). Interacts (via PDZ domains 1 and 3) with SCARB1 (C-terminal domain). Interacts (via PDZ domains 1 and 3) with SLC5A8 (via PDZ-binding motif); interaction increases nicotinate transport activity of SLC5A8. In terms of tissue distribution, expressed in kidney, liver, small intestine. brain, lung, and testis (at protein level).

It is found in the membrane. The protein resides in the cell membrane. Its function is as follows. A scaffold protein that connects plasma membrane proteins and regulatory components, regulating their surface expression in epithelial cells apical domains. May be involved in the coordination of a diverse range of regulatory processes for ion transport and second messenger cascades. In complex with NHERF1, may cluster proteins that are functionally dependent in a mutual fashion and modulate the trafficking and the activity of the associated membrane proteins. May play a role in the cellular mechanisms associated with multidrug resistance through its interaction with ABCC2 and PDZK1IP1. May potentiate the CFTR chloride channel activity. Required for normal cell-surface expression of SCARB1. Plays a role in maintaining normal plasma cholesterol levels via its effects on SCARB1. Plays a role in the normal localization and function of the chloride-anion exchanger SLC26A6 to the plasma membrane in the brush border of the proximal tubule of the kidney. May be involved in the regulation of proximal tubular Na(+)-dependent inorganic phosphate cotransport therefore playing an important role in tubule function. The chain is Na(+)/H(+) exchange regulatory cofactor NHE-RF3 (Pdzk1) from Mus musculus (Mouse).